Here is a 376-residue protein sequence, read N- to C-terminus: Putative endoglucanase type K (376 aa).

An N-terminal signal peptide occupies residues 1–18; sequence MRSYTLLALAGPLAVSAA. The segment at 19–308 is catalytic; the sequence is SGSGHSTRYW…ATKPAQPVNK (290 aa). The Nucleophile role is filled by Asp29. The Proton donor role is filled by Asp140. Residues 229 to 332 form a disordered region; that stretch reads AFKGDTSASK…SCPAKTDATA (104 aa). 2 stretches are compositionally biased toward low complexity: residues 235–258 and 291–306; these read SASK…AQPQ and KPVA…AQPV. The segment at 309–338 is linker; that stretch reads PKTTQKVRGTKTRGSCPAKTDATAKASVVP. Residues 335 to 374 form the CBM1 domain; sequence SVVPAYYQCGGSKSAYPNGNLACATGSKCVKQNEYYSQCV.

It belongs to the glycosyl hydrolase 45 (cellulase K) family.

It carries out the reaction Endohydrolysis of (1-&gt;4)-beta-D-glucosidic linkages in cellulose, lichenin and cereal beta-D-glucans.. The chain is Putative endoglucanase type K from Fusarium oxysporum (Fusarium vascular wilt).